Consider the following 37-residue polypeptide: uncharacterized protein (37 aa).

A helical transmembrane segment spans residues 17 to 37; the sequence is TFVLIVVLFILLIIVGAAFIC.

The protein belongs to the SscA family.

It is found in the membrane. This is an uncharacterized protein from Bacillus subtilis (strain 168).